Here is a 225-residue protein sequence, read N- to C-terminus: 2-phytyl-1,4-naphtoquinone methyltransferase (225 aa).

This sequence belongs to the class I-like SAM-binding methyltransferase superfamily. MenG/UbiE family.

It catalyses the reaction demethylphylloquinol + S-adenosyl-L-methionine = phylloquinol + S-adenosyl-L-homocysteine + H(+). The protein operates within cofactor biosynthesis; phylloquinone biosynthesis. In terms of biological role, methyltransferase required for the conversion of 2-phytyl-1,4-beta-naphthoquinol to phylloquinol. This Thermosynechococcus vestitus (strain NIES-2133 / IAM M-273 / BP-1) protein is 2-phytyl-1,4-naphtoquinone methyltransferase.